The primary structure comprises 80 residues: Serine palmitoyltransferase small subunit B (80 aa).

The Cytoplasmic segment spans residues 1-11 (MDVKHIKDYLS). A helical transmembrane segment spans residues 12–29 (WLYYQYLLITCSYVLEPW). Over 30–36 (EQSIFNT) the chain is Lumenal. The chain crosses the membrane as a helical span at residues 37–57 (LLLTIIAMVIYSSYIFIPIHV). Over 58-80 (RLAVEFFSRIFGGQHESTVALMS) the chain is Cytoplasmic.

The protein belongs to the SPTSS family. SPTSSB subfamily. As to quaternary structure, component of the serine palmitoyltransferase (SPT) complex, which is composed of SPTLC1, SPTLC2 or SPTLC3 and SPTSSA or SPTSSB. The heterodimer consisting of SPTLC1 and SPTLC2/SPTLC3 forms the catalytic core of the enzyme, while SPTSSA or SPTSSB subunits determine substrate specificity. SPT also interacts with ORMDL proteins, especially ORMDL3, which negatively regulate SPT activity in the presence of ceramides.

The protein localises to the endoplasmic reticulum membrane. It functions in the pathway lipid metabolism; sphingolipid metabolism. In terms of biological role, component of the serine palmitoyltransferase multisubunit enzyme (SPT) that catalyzes the initial and rate-limiting step in sphingolipid biosynthesis by condensing L-serine and activated acyl-CoA (most commonly palmitoyl-CoA) to form long-chain bases. The SPT complex is composed of SPTLC1, SPTLC2 or SPTLC3 and SPTSSA or SPTSSB. Within this complex, the heterodimer consisting of SPTLC1 and SPTLC2/SPTLC3 forms the catalytic core. Within the SPT complex, SPTSSB stimulates the catalytic activity and plays a role in substrate specificity. SPT complexes with this subunit showing a preference for longer acyl-CoAs. The SPTLC1-SPTLC2-SPTSSB complex shows a strong preference for C18-CoA substrate, while the SPTLC1-SPTLC3-SPTSSB isozyme displays an ability to use a broader range of acyl-CoAs, without apparent preference. The protein is Serine palmitoyltransferase small subunit B (sptssb) of Xenopus laevis (African clawed frog).